The following is a 454-amino-acid chain: Adenylosuccinate synthetase isozyme 1 B (454 aa).

Positions 1-24 are disordered; it reads MSGTRASNDRSSHPGAGGHKRPRY. Residues 39–45 and 67–69 each bind GTP; these read GDEGKGK and GHT. The active-site Proton acceptor is Asp-40. Residues Asp-40 and Gly-67 each coordinate Mg(2+). Asp-40 contributes to the substrate binding site. Residues 40-43, 65-68, Thr-160, Arg-174, Asn-253, Thr-268, and Arg-332 each bind IMP; these read DEGK and NAGH. The Proton donor role is filled by His-68. 328–334 is a binding site for substrate; that stretch reads VTTGRKR. Residues Arg-334, 360–362, and 442–445 each bind GTP; these read KLD and GVGK.

This sequence belongs to the adenylosuccinate synthetase family. Homodimer. The cofactor is Mg(2+).

The protein localises to the cytoplasm. The catalysed reaction is IMP + L-aspartate + GTP = N(6)-(1,2-dicarboxyethyl)-AMP + GDP + phosphate + 2 H(+). Its pathway is purine metabolism; AMP biosynthesis via de novo pathway; AMP from IMP: step 1/2. Functionally, component of the purine nucleotide cycle (PNC), which interconverts IMP and AMP to regulate the nucleotide levels in various tissues, and which contributes to glycolysis and ammoniagenesis. Catalyzes the first committed step in the biosynthesis of AMP from IMP. The chain is Adenylosuccinate synthetase isozyme 1 B (adss1-b) from Xenopus laevis (African clawed frog).